The primary structure comprises 467 residues: Cytochrome c-552 (467 aa).

The first 27 residues, 1–27 (MMKKMTGKSFALSALVAASFMAAGAMA), serve as a signal peptide directing secretion. Residue His87 coordinates heme c. The heme site is built by Cys115, Cys118, and Lys119. Residues Cys153, Cys156, His157, Cys195, Cys198, and His199 each contribute to the heme c site. Ca(2+) is bound by residues Glu201, Tyr202, Lys250, and Gln252. Tyr202 contributes to the substrate binding site. His253 serves as a coordination point for substrate. Heme c-binding residues include His264, Cys271, Cys274, His275, His290, Cys303, Cys306, His307, and His382.

Belongs to the cytochrome c-552 family. Ca(2+) serves as cofactor. The cofactor is heme c.

The protein localises to the periplasm. It catalyses the reaction 6 Fe(III)-[cytochrome c] + NH4(+) + 2 H2O = 6 Fe(II)-[cytochrome c] + nitrite + 8 H(+). It functions in the pathway nitrogen metabolism; nitrate reduction (assimilation). Its function is as follows. Catalyzes the reduction of nitrite to ammonia, consuming six electrons in the process. This Shewanella sp. (strain W3-18-1) protein is Cytochrome c-552.